The primary structure comprises 284 residues: MTGPSGAGRSTAINVLEDLGFEAIDNLPMGLLMRLLDGPALRRPLALGLDARNRDFSTEGFLDLSKRLASLEGFQVTTLYLDCSADILLRRFSETRRRHPMSPGSSPLEGVEHELELLRPIREAADTLIDTTALNVHQLRREVERWFAPSGGSMLAISVESFSYKRGLPRGLDMVFDCRFLANPHWQPDLRAADGRDPAVAAYVHADPQYLPFFTRVTDLLQSLLPAFRSEGKAHLSVGFGCTGGQHRSVALTEAVAKALAEAGGQVSIRHREMERRKPDARPD.

Residue 3–10 (GPSGAGRS) coordinates ATP. 50–53 (DARN) serves as a coordination point for GTP.

The protein belongs to the RapZ-like family.

Its function is as follows. Displays ATPase and GTPase activities. In Ruegeria pomeroyi (strain ATCC 700808 / DSM 15171 / DSS-3) (Silicibacter pomeroyi), this protein is Nucleotide-binding protein SPO0713.